The sequence spans 127 residues: Small ribosomal subunit protein uS12 (127 aa).

Aspartate 89 is subject to 3-methylthioaspartic acid.

It belongs to the universal ribosomal protein uS12 family. As to quaternary structure, part of the 30S ribosomal subunit. Contacts proteins S8 and S17. May interact with IF1 in the 30S initiation complex.

With S4 and S5 plays an important role in translational accuracy. Its function is as follows. Interacts with and stabilizes bases of the 16S rRNA that are involved in tRNA selection in the A site and with the mRNA backbone. Located at the interface of the 30S and 50S subunits, it traverses the body of the 30S subunit contacting proteins on the other side and probably holding the rRNA structure together. The combined cluster of proteins S8, S12 and S17 appears to hold together the shoulder and platform of the 30S subunit. The protein is Small ribosomal subunit protein uS12 of Aliarcobacter butzleri (strain RM4018) (Arcobacter butzleri).